A 570-amino-acid chain; its full sequence is MSMFCYQCQEAAGGRGCTVKGVCGKTEDIAKTQDLIIYVVKGIAIYSSQVREIGLNTSEADKFIVESLFSTITNANFDAKALNARVQEGLKIRQSLKDAIIKAGGSYNSKENKSWTSKFLSVLGIKNDKDEKEIHDAAAWAANNPEDFKKKAETVGILATENEDIRSLRELLTYGLKGMAAYLEHANNLGYDEDSIHAFMEKALVATLDDTLSADELTALVLECGKYGVDVMALLDKANTSTYGNPEITKVNIGVRNNPGILISGHDLKDMEELLKQTEGTGVDVYTHSEMLPANYYPAFKKYKHFVGNYGNAWWKQNEEFEAFNGPILMTTNCIVTPKASYKDRMYTTGVTGFEGVKHINASKDGKKDFSEIIEHAKRCSSPKEIEKGEIIGGFAHNQVLALAPQVVDAVKTGAIKRFFVMAGCDGRMKSRNYYTDFAKALPKDTVILTAGCAKYKYNKLDLGDINGIPRVLDAGQCNDSYSLAVIALKLKEVFELEDINELPISYNIAWYEQKAVIVLLALLHLGVKNIHLGPTLPAFLSPNVAKILVENFGIGTISSVDKDIKMFMN.

Cys-5, Cys-8, Cys-17, and Cys-23 together coordinate [4Fe-4S] cluster. Residues His-266, Glu-290, Cys-334, Cys-425, Cys-453, Cys-478, Glu-513, and Lys-515 each contribute to the hybrid [4Fe-2O-2S] cluster site. Cys-425 bears the Cysteine persulfide mark.

The protein belongs to the HCP family. Requires [4Fe-4S] cluster as cofactor. It depends on hybrid [4Fe-2O-2S] cluster as a cofactor.

Its subcellular location is the cytoplasm. It carries out the reaction A + NH4(+) + H2O = hydroxylamine + AH2 + H(+). Its function is as follows. Catalyzes the reduction of hydroxylamine to form NH(3) and H(2)O. The polypeptide is Hydroxylamine reductase (Clostridium botulinum (strain ATCC 19397 / Type A)).